Consider the following 108-residue polypeptide: MRMDEFYTKVYDAVCEIPYGKVSTYGEIARYVGMPSYARQVGQAMKHLHPETHVPWHRVINSRGTISKRDISAGEQRQKDRLEEEGVEIYQTSLGEYKLNLPEYMWKP.

The protein belongs to the MGMT family. ATL subfamily.

Involved in DNA damage recognition. Binds DNA containing O(6)-methylguanine and larger O(6)-alkylguanine adducts. The DNA is bent, the damaged base is rotated out of the DNA duplex into a hydrophobic binding pocket (nucleotide flipping), with Arg-39 donating a hydrogen bond to the orphaned cytosine to stabilize the extrahelical DNA conformation. This structural change in DNA presents the lesion to the nucleotide excision repair (NER) pathway. The affinity for O(6)-alkylguanine adducts increases with the size of the alkyl group. Low affinity small O(6)-alkylguanines are directed to the global genome repair pathway of NER via rhp7-rhp16 and rhp41-rhp23, while strong binding to bulky O(6)-alkylguanines stalls the transcription machinery and diverts the damage to the transcription-coupled repair pathway of NER via rhp26. The polypeptide is Alkyltransferase-like protein 1 (Schizosaccharomyces pombe (strain 972 / ATCC 24843) (Fission yeast)).